The sequence spans 243 residues: Segregation and condensation protein A (243 aa).

It belongs to the ScpA family. As to quaternary structure, component of a cohesin-like complex composed of ScpA, ScpB and the Smc homodimer, in which ScpA and ScpB bind to the head domain of Smc. The presence of the three proteins is required for the association of the complex with DNA.

It is found in the cytoplasm. Its function is as follows. Participates in chromosomal partition during cell division. May act via the formation of a condensin-like complex containing Smc and ScpB that pull DNA away from mid-cell into both cell halves. The polypeptide is Segregation and condensation protein A (Staphylococcus epidermidis (strain ATCC 35984 / DSM 28319 / BCRC 17069 / CCUG 31568 / BM 3577 / RP62A)).